The sequence spans 317 residues: tRNA dimethylallyltransferase (317 aa).

14 to 21 (GPTASGKT) is an ATP binding site. 16-21 (TASGKT) lines the substrate pocket. Interaction with substrate tRNA stretches follow at residues 39–42 (DSAL), 163–167 (QRIQR), and 248–253 (RCVGYR).

The protein belongs to the IPP transferase family. In terms of assembly, monomer. The cofactor is Mg(2+).

The enzyme catalyses adenosine(37) in tRNA + dimethylallyl diphosphate = N(6)-dimethylallyladenosine(37) in tRNA + diphosphate. Catalyzes the transfer of a dimethylallyl group onto the adenine at position 37 in tRNAs that read codons beginning with uridine, leading to the formation of N6-(dimethylallyl)adenosine (i(6)A). This chain is tRNA dimethylallyltransferase, found in Paraburkholderia phymatum (strain DSM 17167 / CIP 108236 / LMG 21445 / STM815) (Burkholderia phymatum).